The sequence spans 325 residues: Probable tRNA-dihydrouridine synthase 2 (325 aa).

18–20 (PME) is a binding site for FMN. Residue cysteine 105 is the Proton donor of the active site. Residues lysine 143, 208 to 210 (NGD), and 232 to 233 (GR) each bind FMN.

The protein belongs to the Dus family. It depends on FMN as a cofactor.

It carries out the reaction a 5,6-dihydrouridine in tRNA + NAD(+) = a uridine in tRNA + NADH + H(+). The enzyme catalyses a 5,6-dihydrouridine in tRNA + NADP(+) = a uridine in tRNA + NADPH + H(+). Its function is as follows. Catalyzes the synthesis of 5,6-dihydrouridine (D), a modified base found in the D-loop of most tRNAs, via the reduction of the C5-C6 double bond in target uridines. The polypeptide is Probable tRNA-dihydrouridine synthase 2 (dus2) (Bacillus subtilis (strain 168)).